A 78-amino-acid chain; its full sequence is UPF0291 protein Exig_1097 (78 aa).

The tract at residues 57-78 (EEGTDVTPEKLKQAQEEERNKQ) is disordered. The segment covering 63 to 78 (TPEKLKQAQEEERNKQ) has biased composition (basic and acidic residues).

This sequence belongs to the UPF0291 family.

It is found in the cytoplasm. This Exiguobacterium sibiricum (strain DSM 17290 / CCUG 55495 / CIP 109462 / JCM 13490 / 255-15) protein is UPF0291 protein Exig_1097.